The chain runs to 483 residues: Rhamnulokinase (483 aa).

11–15 (ASSGR) contacts ATP. Residues Gly79 and 234-236 (HDT) each bind substrate. Asp235 serves as the catalytic Proton acceptor. Thr257 provides a ligand contact to ATP. Residue Asn294 participates in substrate binding. Gln302 provides a ligand contact to ATP. Cys352 and Cys369 are oxidised to a cystine. Gly401 serves as a coordination point for ATP.

Belongs to the rhamnulokinase family. It depends on Mg(2+) as a cofactor.

The enzyme catalyses L-rhamnulose + ATP = L-rhamnulose 1-phosphate + ADP + H(+). It functions in the pathway carbohydrate degradation; L-rhamnose degradation; glycerone phosphate from L-rhamnose: step 2/3. Functionally, involved in the catabolism of L-rhamnose (6-deoxy-L-mannose). Catalyzes the transfer of the gamma-phosphate group from ATP to the 1-hydroxyl group of L-rhamnulose to yield L-rhamnulose 1-phosphate. This Listeria monocytogenes serotype 4b (strain F2365) protein is Rhamnulokinase.